The primary structure comprises 1249 residues: Clustered mitochondria protein homolog (1249 aa).

The tract at residues 1 to 32 (MAQTNGELEHSKETPEQLTNGNHPEETQEEDN) is disordered. The region spanning 318-562 (DITRSQENYL…RVTPLDVMWQ (245 aa)) is the Clu domain. Over residues 605-628 (KAEADAAKAESSEATESKEQASEE) the composition is skewed to basic and acidic residues. 2 disordered regions span residues 605 to 636 (KAEA…DQER) and 868 to 903 (KAPA…AAKE). TPR repeat units lie at residues 974–1007 (AKLY…TERT), 1016–1049 (ILSY…WKII), and 1058–1091 (ITTM…CESL). The segment at 1174–1249 (NMNPRSLGTK…KLRGSKKSSA (76 aa)) is disordered. A compositionally biased stretch (polar residues) spans 1176–1190 (NPRSLGTKIQPQVGQ).

Belongs to the CLU family. As to quaternary structure, may associate with the eukaryotic translation initiation factor 3 (eIF-3) complex.

The protein resides in the cytoplasm. MRNA-binding protein involved in proper cytoplasmic distribution of mitochondria. In Aspergillus niger (strain ATCC MYA-4892 / CBS 513.88 / FGSC A1513), this protein is Clustered mitochondria protein homolog.